A 383-amino-acid polypeptide reads, in one-letter code: Heme A synthase (383 aa).

8 consecutive transmembrane segments (helical) span residues 38–58 (VRVWLMMLFGLVVIMIAVGGL), 127–147 (VIGLVWALGFFGFLVTRKIPP), 153–173 (LFLLGVLGGLQGAIGWWMVAS), 187–207 (LATHLGLAFFILGLIAWYIMV), 230–250 (ANWLMGLAAVQILLGALVAGI), 287–307 (LVQFNHRMVGYLLLLVGLYVW), 321–341 (AFDWVAVILFGQMVLGIVTVL), and 344–364 (APWTWAIAHQFGAVVTICLIL). Position 292 (His-292) interacts with heme. His-352 is a binding site for heme.

The protein belongs to the COX15/CtaA family. Type 2 subfamily. Interacts with CtaB. It depends on heme b as a cofactor.

It is found in the cell membrane. It catalyses the reaction Fe(II)-heme o + 2 A + H2O = Fe(II)-heme a + 2 AH2. The protein operates within porphyrin-containing compound metabolism; heme A biosynthesis; heme A from heme O: step 1/1. Catalyzes the conversion of heme O to heme A by two successive hydroxylations of the methyl group at C8. The first hydroxylation forms heme I, the second hydroxylation results in an unstable dihydroxymethyl group, which spontaneously dehydrates, resulting in the formyl group of heme A. In Dinoroseobacter shibae (strain DSM 16493 / NCIMB 14021 / DFL 12), this protein is Heme A synthase.